The following is a 3419-amino-acid chain: Genome polyprotein (3419 aa).

The tract at residues 1-25 (MKNPKEEIRRIRIVNMLKRGVARVN) is disordered. Over 1–104 (MKNPKEEIRR…INARKERKRR (104 aa)) the chain is Cytoplasmic. The hydrophobic; homodimerization of capsid protein C stretch occupies residues 37–72 (LLLGHGPIRMVLAILAFLRFTAIKPSLGLINRWGSV). A propeptide spans 105 to 122 (GADTSIGIIGLLLTTAMA) (ER anchor for capsid protein C, removed in mature form by serine protease NS3). Residues 105–125 (GADTSIGIIGLLLTTAMAAEI) form a helical membrane-spanning segment. Topologically, residues 126 to 249 (TRRGSAYYMY…YTKHLIKVEN (124 aa)) are extracellular. An N-linked (GlcNAc...) asparagine; by host glycan is attached at Asn192. A helical transmembrane segment spans residues 250–269 (WIFRNPGFALVAVAIAWLLG). Over 270 to 274 (SSTSQ) the chain is Cytoplasmic. The helical transmembrane segment at 275 to 290 (KVIYLVMILLIAPAYS) threads the bilayer. Over 291-741 (IRCIGVSNRD…HQIFGAAFKS (451 aa)) the chain is Extracellular. Cys293 and Cys320 form a disulfide bridge. Residue Lys328 forms a Glycyl lysine isopeptide (Lys-Gly) (interchain with G-Cter in ubiquitin) linkage. Disulfide bonds link Cys350–Cys406, Cys350–Cys411, Cys364–Cys395, Cys382–Cys406, Cys382–Cys411, Cys476–Cys577, and Cys594–Cys625. Residues 388–401 (DRGWGNGCGLFGKG) are fusion peptide. Lys567 is covalently cross-linked (Glycyl lysine isopeptide (Lys-Gly) (interchain with G-Cter in ubiquitin)). The helical transmembrane segment at 742–763 (LFGGMSWFSQILIGTLLVWLGL) threads the bilayer. At 764–769 (NTKNGS) the chain is on the cytoplasmic side. Residues 770–790 (ISLTCLALGGVMIFLSTAVSA) form a helical membrane-spanning segment. Residues 791 to 1173 (DVGCSVDFSK…EGLKKRMTTK (383 aa)) lie on the Lumenal side of the membrane. Intrachain disulfides connect Cys794-Cys805, Cys845-Cys933, Cys969-Cys1013, Cys1070-Cys1119, Cys1081-Cys1102, and Cys1103-Cys1106. Residues Asn920 and Asn997 are each glycosylated (N-linked (GlcNAc...) asparagine; by host). A helical membrane pass occupies residues 1174-1194 (IIMSTSMAVLVVMILGGFSMS). Residues 1195-1216 (DLAKLVILMGATFAEMNTGGDV) are Cytoplasmic-facing. The helical transmembrane segment at 1217-1237 (AHLALVAAFKVRPALLVSFIF) threads the bilayer. Residues 1238–1266 (RANWTPRESMLLALASCLLQTAISALEGD) lie on the Lumenal side of the membrane. A helical membrane pass occupies residues 1267 to 1287 (LMVLINGFALAWLAIRAMAVP). Topologically, residues 1288 to 1291 (RTDN) are cytoplasmic. The helical transmembrane segment at 1292–1312 (IALPILAALTPLARGTLLVAW) threads the bilayer. At 1313–1341 (RAGLATCGGIMLLSLKGKGSVKKNLPFVM) the chain is on the lumenal side. The chain crosses the membrane as a helical span at residues 1342 to 1362 (ALGLTAVRVVDPINVVGLLLL). At 1363–1369 (TRSGKRS) the chain is on the cytoplasmic side. The helical transmembrane segment at 1370 to 1390 (WPPSEVLTAVGLICALAGGFA) threads the bilayer. Residues 1391 to 1393 (KAD) are Lumenal-facing. The chain crosses the membrane as a helical span at residues 1394–1414 (IEMAGPMAAVGLLIVSYVVSG). At 1415 to 1468 (KSVDMYIERAGDITWEKDAEVTGNSPRLDVALDESGDFSLVEEDGPPMREIILK) the chain is on the cytoplasmic side. The interval 1421 to 1460 (IERAGDITWEKDAEVTGNSPRLDVALDESGDFSLVEEDGP) is interacts with and activates NS3 protease. A disordered region spans residues 1425–1447 (GDITWEKDAEVTGNSPRLDVALD). An intramembrane region (helical) is located at residues 1469-1489 (VVLMAICGMNPIAIPFAAGAW). Topologically, residues 1490–2166 (YVYVKTGKRS…KAAAAQLPET (677 aa)) are lumenal. The Peptidase S7 domain maps to 1499–1676 (SGALWDVPAP…KREEETPVEC (178 aa)). Residues His1549, Asp1573, and Ser1633 each act as charge relay system; for serine protease NS3 activity in the active site. The 157-residue stretch at 1679–1835 (PSMLKKKQLT…DSNSPIMDTE (157 aa)) folds into the Helicase ATP-binding domain. The segment at 1683-1686 (KKKQ) is important for RNA-binding. Residue 1692–1699 (LHPGAGKT) coordinates ATP. Positions 1783–1786 (DEAH) match the DEAH box motif. Residues 1830-2009 (PIMDTEVEVP…GLIASLYRPE (180 aa)) enclose the Helicase C-terminal domain. N6-acetyllysine; by host is present on Lys1887. A helical transmembrane segment spans residues 2167-2187 (LETIMLLGLLGTVSLGIFFVL). The Lumenal portion of the chain corresponds to 2188–2191 (MRNK). An intramembrane region (helical) is located at residues 2192–2212 (GIGKMGFGMVTLGASAWLMWL). The Cytoplasmic segment spans residues 2213–2214 (SE). A helical membrane pass occupies residues 2215-2235 (IEPARIACVLIVVFLLLVVLI). The Lumenal segment spans residues 2236-2250 (PEPEKQRSPQDNQMA). Positions 2251–2265 (IIIMVAVGLLGLITA) form an intramembrane region, helical. Residues 2266–2303 (NELGWLERTKNDIAHLMGRREEGATMGFSMDIDLRPAS) lie on the Lumenal side of the membrane. The helical intramembrane region spans 2304 to 2324 (AWAIYAALTTLITPAVQHAVT). At 2325–2340 (TSYNNYSLMAMATQAG) the chain is on the lumenal side. Residues 2341 to 2361 (VLFGMGKGMPFMHGDLGVPLL) traverse the membrane as a helical segment. Over 2362–2371 (MMGCYSQLTP) the chain is Cytoplasmic. The chain crosses the membrane as a helical span at residues 2372-2392 (LTLIVAIILLVAHYMYLIPGL). Residues 2393–2437 (QAAAARAAQKRTAAGIMKNPVVDGIVVTDIDTMTIDPQVEKKMGQ) lie on the Lumenal side of the membrane. A helical membrane pass occupies residues 2438–2458 (VLLIAVAISSAVLLRTAWGWG). Residues 2459–3419 (EAGALITAAT…GEEGSTPGVL (961 aa)) lie on the Cytoplasmic side of the membrane. The mRNA cap 0-1 NS5-type MT domain occupies 2517 to 2781 (GGGTGETLGE…DVNLGSGTRA (265 aa)). MRNA-binding residues include Lys2529, Leu2532, Asn2533, Met2535, Phe2540, and Lys2544. 2529 to 2535 (KARLNQM) is a GTP binding site. Ser2572 serves as a coordination point for S-adenosyl-L-methionine. A Phosphoserine modification is found at Ser2572. Catalysis depends on Lys2577, which acts as the For 2'-O-MTase activity. The tract at residues 2593 to 2596 (VVDL) is SUMO-interacting motif (SIM). S-adenosyl-L-methionine-binding residues include Gly2602, Trp2603, Thr2620, Lys2621, His2626, Glu2627, Asp2647, Val2648, Asp2662, and Ile2663. Asp2662 functions as the For 2'-O-MTase activity in the catalytic mechanism. 2665-2671 (ESSSSPE) lines the GTP pocket. Residue Ser2666 participates in mRNA binding. The active-site For 2'-O-MTase activity is Lys2698. MRNA-binding residues include Arg2729 and Ser2731. A GTP-binding site is contributed by 2729 to 2731 (RNS). The active-site For 2'-O-MTase activity is the Glu2734. Tyr2736 lines the S-adenosyl-L-methionine pocket. The Nuclear localization signal (NLS) signature appears at 2904 to 2910 (KRKRPRV). The Zn(2+) site is built by Glu2955, His2959, Cys2964, and Cys2967. The RdRp catalytic domain occupies 3045–3195 (GKMYADDTAG…KPIDDRFAHA (151 aa)). Zn(2+)-binding residues include His3230, Cys3246, and Cys3365.

It in the N-terminal section; belongs to the class I-like SAM-binding methyltransferase superfamily. mRNA cap 0-1 NS5-type methyltransferase family. Homodimer. Interacts with host SERTAD3; this interaction promotes capsid protein C degradation. Interacts with host CAPRIN1; this interaction is probably linked to the inhibition of stress granules formation by the virus. Interacts with host G3BP1; this interaction is probably linked to the inhibition of stress granules formation by the virus. As to quaternary structure, forms heterodimers with envelope protein E in the endoplasmic reticulum and Golgi. Interacts with non-structural protein 2A. In terms of assembly, homodimer; in the endoplasmic reticulum and Golgi. Interacts with host TYRO3, AXL and DC-SIGN proteins. Interacts with non-structural protein 2A. Interacts with host HAVCR1; this interaction likely mediates virus attachment to host cell. Interacts with host NCAM1. Interacts with host HSPA5. Interacts with Aedes aegypti SRPN25, APY and venom allergen-1 salivary proteins; the interactions do not affect Zika virus replication in human endothelial cells and keratinocytes. Homodimer; Homohexamer when secreted. Interacts with host TBK1. Interacts with host USP8. Interacts with envelope protein E. Interacts with host HSPA5. As to quaternary structure, interacts with the structural protein prM/E complex, and the NS2B/NS3 protease complex. In terms of assembly, forms a heterodimer with serine protease NS3. May form homooligomers. Interacts with human SPCS1. Interacts with non-structural protein 2A. Forms a heterodimer with NS2B. Interacts with NS4B. Interacts with unphosphorylated RNA-directed RNA polymerase NS5; this interaction stimulates RNA-directed RNA polymerase NS5 guanylyltransferase activity. Interacts with non-structural protein 2A. Interacts with host SHFL; this interaction promotes NS3 degradation via a lysosome-dependent pathway. Interacts with host CEP63; this interaction disorganizes the centrosome and inhibits host innate immune response. As to quaternary structure, may interact with host ANKLE2; the interaction may cause defects in brain development, such as microcephaly. May interact with host SRPRA and SEC61G. In terms of assembly, interacts with serine protease NS3. Interacts with NS1. Interacts with host TBK1. Homodimer. Interacts with host STAT2; this interaction inhibits the phosphorylation of the latter, and, when all viral proteins are present (polyprotein), targets STAT2 for degradation. Interacts with host TBK1 and IKBKE; these interactions lead to the inhibition of the host RIG-I signaling pathway. Interacts with host KPNA2. Interacts with host PAF1 complex; the interaction may prevent the recruitment of the host PAF1 complex to interferon-responsive genes, and thus reduces the immune response. Interacts with serine protease NS3. Interacts with host ZSWIM8; this interaction allows STAT2 binding to ZSWIM8 and subsequent proteasomal degradation leading to inhibition of interferon signaling. Post-translationally, specific enzymatic cleavages in vivo yield mature proteins. Cleavages in the lumen of endoplasmic reticulum are performed by host signal peptidase, whereas cleavages in the cytoplasmic side are performed by serine protease NS3. Signal cleavage at the 2K-4B site requires a prior NS3 protease-mediated cleavage at the 4A-2K site. Cleaved in post-Golgi vesicles by a host furin, releasing the mature small envelope protein M, and peptide pr. This cleavage is incomplete as up to 30% of viral particles still carry uncleaved prM. In terms of processing, N-glycosylation plays a role in virulence in mammalian and mosquito hosts, but may have no effect on neurovirulence. Post-translationally, ubiquitination by host TRIM7 promotes virus attachment and fusion of the virus and the host endosome membrane. N-glycosylated. The excreted form is glycosylated, which is required for efficient secretion of the protein from infected cells. In terms of processing, acetylated by host KAT5. Acetylation modulates NS3 RNA-binding and unwinding activities and plays an important positive role for viral replication. Post-translationally, phosphorylated on serines residues. This phosphorylation may trigger NS5 nuclear localization. Sumoylated, required for regulating IFN induced interferon stimulated genes/ISGs.

It is found in the virion. Its subcellular location is the host nucleus. The protein localises to the host cytoplasm. It localises to the host perinuclear region. The protein resides in the secreted. It is found in the virion membrane. Its subcellular location is the host endoplasmic reticulum membrane. The enzyme catalyses Selective hydrolysis of -Xaa-Xaa-|-Yaa- bonds in which each of the Xaa can be either Arg or Lys and Yaa can be either Ser or Ala.. It catalyses the reaction RNA(n) + a ribonucleoside 5'-triphosphate = RNA(n+1) + diphosphate. The catalysed reaction is a ribonucleoside 5'-triphosphate + H2O = a ribonucleoside 5'-diphosphate + phosphate + H(+). It carries out the reaction ATP + H2O = ADP + phosphate + H(+). The enzyme catalyses a 5'-end (5'-triphosphoguanosine)-ribonucleoside in mRNA + S-adenosyl-L-methionine = a 5'-end (N(7)-methyl 5'-triphosphoguanosine)-ribonucleoside in mRNA + S-adenosyl-L-homocysteine. It catalyses the reaction a 5'-end (N(7)-methyl 5'-triphosphoguanosine)-ribonucleoside in mRNA + S-adenosyl-L-methionine = a 5'-end (N(7)-methyl 5'-triphosphoguanosine)-(2'-O-methyl-ribonucleoside) in mRNA + S-adenosyl-L-homocysteine + H(+). Plays a role in virus budding by binding to the host cell membrane and packages the viral RNA into a nucleocapsid that forms the core of the mature virus particle. During virus entry, may induce genome penetration into the host cytoplasm after hemifusion induced by the surface proteins. Can migrate to the cell nucleus where it modulates host functions. Inhibits the integrated stress response (ISR) in the infected cell. In terms of biological role, inhibits RNA silencing by interfering with host Dicer. Its function is as follows. Prevents premature fusion activity of envelope proteins in trans-Golgi by binding to envelope protein E at pH 6.0. After virion release in extracellular space, gets dissociated from E dimers. Functionally, plays a role in host immune defense modulation and protection of envelope protein E during virion synthesis. PrM-E cleavage is inefficient, many virions are only partially matured and immature prM-E proteins could play a role in immune evasion. Contributes to fetal microcephaly in humans. Acts as a chaperone for envelope protein E during intracellular virion assembly by masking and inactivating envelope protein E fusion peptide. prM is the only viral peptide matured by host furin in the trans-Golgi network probably to avoid catastrophic activation of the viral fusion activity in acidic Golgi compartment prior to virion release. May play a role in virus budding. Exerts cytotoxic effects by activating a mitochondrial apoptotic pathway through M ectodomain. May display a viroporin activity. In terms of biological role, binds to host cell surface receptors and mediates fusion between viral and cellular membranes. Efficient virus attachment to cell is, at least in part, mediated by host HAVCR1 in a cell-type specific manner. In addition, host NCAM1 can also be used as entry receptor. Interaction with host HSPA5 plays an important role in the early stages of infection as well. Envelope protein is synthesized in the endoplasmic reticulum and forms a heterodimer with protein prM. The heterodimer plays a role in virion budding in the ER, and the newly formed immature particle is covered with 60 spikes composed of heterodimers between precursor prM and envelope protein E. The virion is transported to the Golgi apparatus where the low pH causes the dissociation of PrM-E heterodimers and formation of E homodimers. PrM-E cleavage is inefficient, many virions are only partially matured and immature prM-E proteins could play a role in immune evasion. Its function is as follows. Plays a role in the inhibition of host RLR-induced interferon-beta activation by targeting TANK-binding kinase 1/TBK1. In addition, recruits the host deubiquitinase USP8 to cleave 'Lys-11'-linked polyubiquitin chains from caspase-1/CASP1 thus inhibiting its proteasomal degradation. In turn, stabilized CASP1 promotes cleavage of cGAS, which inhibits its ability to recognize mitochondrial DNA release and initiate type I interferon signaling. Functionally, component of the viral RNA replication complex that recruits genomic RNA, the structural protein prM/E complex, and the NS2B/NS3 protease complex to the virion assembly site and orchestrates virus morphogenesis. Antagonizes also the host MDA5-mediated induction of alpha/beta interferon antiviral response. May disrupt adherens junction formation and thereby impair proliferation of radial cells in the host cortex. Required cofactor for the serine protease function of NS3. In terms of biological role, displays three enzymatic activities: serine protease, NTPase and RNA helicase. NS3 serine protease, in association with NS2B, performs its autocleavage and cleaves the polyprotein at dibasic sites in the cytoplasm: C-prM, NS2A-NS2B, NS2B-NS3, NS3-NS4A, NS4A-2K and NS4B-NS5. NS3 RNA helicase binds RNA and unwinds dsRNA in the 3' to 5' direction. Leads to translation arrest when expressed ex vivo. Disrupts host centrosome organization in a CEP63-dependent manner to degrade host TBK1 and inhibits innate immune response. Inhibits the integrated stress response (ISR) in the infected cell. Its function is as follows. Regulates the ATPase activity of the NS3 helicase activity. NS4A allows NS3 helicase to conserve energy during unwinding. Cooperatively with NS4B suppresses the Akt-mTOR pathway and leads to cellular dysregulation. By inhibiting host ANKLE2 functions, may cause defects in brain development, such as microcephaly. Also antagonizes the host MDA5-mediated induction of alpha/beta interferon antiviral response. Inhibits the integrated stress response (ISR) in the infected cell. Functionally, functions as a signal peptide for NS4B and is required for the interferon antagonism activity of the latter. Induces the formation of ER-derived membrane vesicles where the viral replication takes place. Also plays a role in the inhibition of host RLR-induced interferon-beta production at TANK-binding kinase 1/TBK1 level. Cooperatively with NS4A suppresses the Akt-mTOR pathway and leads to cellular dysregulation. In terms of biological role, replicates the viral (+) and (-) RNA genome, and performs the capping of genomes in the cytoplasm. Methylates viral RNA cap at guanine N-7 and ribose 2'-O positions. Once sufficient NS5 is expressed, binds to the cap-proximal structure and inhibits further translation of the viral genome. Besides its role in RNA genome replication, also prevents the establishment of a cellular antiviral state by blocking the interferon-alpha/beta (IFN-alpha/beta) signaling pathway. Mechanistically, interferes with host kinases TBK1 and IKKE upstream of interferon regulatory factor 3/IRF3 to inhibit the RIG-I pathway. Also antagonizes type I interferon signaling by targeting STAT2 for degradation by the proteasome thereby preventing activation of JAK-STAT signaling pathway. Mechanistically, acts as a scaffold protein to connect host ZSWIM8/CUL3 ligase complex and STAT2, leading to STAT2 degradation. Within the host nucleus, disrupts host SUMO1 and STAT2 co-localization with PML, resulting in PML degradation. May also reduce immune responses by preventing the recruitment of the host PAF1 complex to interferon-responsive genes. This chain is Genome polyprotein, found in Aedes aegypti (Yellowfever mosquito).